Here is an 873-residue protein sequence, read N- to C-terminus: Bifunctional levopimaradiene synthase, chloroplastic (873 aa).

Residues 1–59 (MAGVLFANLPCSLQLSPKVPFRQSTNILIPFHKRSSFGFNAQHCVRSHLRLRWNCVGIH) constitute a chloroplast transit peptide. Substrate is bound at residue Lys-271. The Mg(2+) site is built by Asp-405 and Asp-407. The short motif at 405-408 (DVDD) is the DXDD motif element. A substrate-binding site is contributed by Lys-492. Positions 624, 628, 769, 773, and 777 each coordinate Mg(2+). Positions 624–628 (DDLYD) match the DDXXD motif motif.

Belongs to the terpene synthase family. Tpsd subfamily. It depends on Mg(2+) as a cofactor. As to expression, expressed in roots.

It is found in the plastid. It localises to the chloroplast. It carries out the reaction (2E,6E,10E)-geranylgeranyl diphosphate = (+)-copalyl diphosphate. The catalysed reaction is (+)-copalyl diphosphate = abieta-8(14),12-diene + diphosphate. The protein operates within terpene metabolism; ginkgolide biosynthesis. Functionally, catalyzes the initial cyclization step in the biosynthesis of ginkgolides, a structurally unique family of diterpenoids that are highly specific platelet-activating-factor receptor antagonists. Bifunctional enzyme that catalyzes two sequential cyclizations of geranylgeranyl diphosphate (GGPP) to levopimaradiene. This chain is Bifunctional levopimaradiene synthase, chloroplastic (LPS), found in Ginkgo biloba (Ginkgo).